The following is a 427-amino-acid chain: 3-isopropylmalate dehydratase large subunit (427 aa).

C308, C368, and C371 together coordinate [4Fe-4S] cluster.

This sequence belongs to the aconitase/IPM isomerase family. LeuC type 2 subfamily. As to quaternary structure, heterodimer of LeuC and LeuD. Requires [4Fe-4S] cluster as cofactor.

The catalysed reaction is (2R,3S)-3-isopropylmalate = (2S)-2-isopropylmalate. It participates in amino-acid biosynthesis; L-leucine biosynthesis; L-leucine from 3-methyl-2-oxobutanoate: step 2/4. In terms of biological role, catalyzes the isomerization between 2-isopropylmalate and 3-isopropylmalate, via the formation of 2-isopropylmaleate. The protein is 3-isopropylmalate dehydratase large subunit of Citrifermentans bemidjiense (strain ATCC BAA-1014 / DSM 16622 / JCM 12645 / Bem) (Geobacter bemidjiensis).